The primary structure comprises 445 residues: Flagellum-associated coiled-coil domain-containing protein 1 (445 aa).

The disordered stretch occupies residues 26 to 47 (PQLPRKNSTGSSKLTPLVPAPK). A compositionally biased stretch (polar residues) spans 30–39 (RKNSTGSSKL). Coiled-coil stretches lie at residues 122 to 226 (SRTN…TYQD) and 283 to 315 (AVFENFIQEKEELLKQHQSDTLQLEELRKTKEV). Lys-376 carries the post-translational modification N6-acetyllysine. Residues 387–414 (EKYKHTIQILTEENIHLKQKIISKNEEI) are a coiled coil.

It is found in the cytoplasm. The protein resides in the cytoplasmic granule. Its subcellular location is the cell projection. The protein localises to the cilium. It localises to the flagellum. This is Flagellum-associated coiled-coil domain-containing protein 1 from Homo sapiens (Human).